The following is a 306-amino-acid chain: S-methyl-5'-thioadenosine phosphorylase (306 aa).

Phosphate-binding positions include T21, 63-64 (RH), and 96-97 (SA). M198 contacts substrate. S199 contributes to the phosphate binding site. Residue 222-224 (DYD) coordinates substrate.

It belongs to the PNP/MTAP phosphorylase family. MTAP subfamily. Homotrimer.

The protein resides in the cytoplasm. It is found in the nucleus. The enzyme catalyses S-methyl-5'-thioadenosine + phosphate = 5-(methylsulfanyl)-alpha-D-ribose 1-phosphate + adenine. Its pathway is amino-acid biosynthesis; L-methionine biosynthesis via salvage pathway; S-methyl-5-thio-alpha-D-ribose 1-phosphate from S-methyl-5'-thioadenosine (phosphorylase route): step 1/1. Its function is as follows. Catalyzes the reversible phosphorylation of S-methyl-5'-thioadenosine (MTA) to adenine and 5-methylthioribose-1-phosphate. Involved in the breakdown of MTA, a major by-product of polyamine biosynthesis. Responsible for the first step in the methionine salvage pathway after MTA has been generated from S-adenosylmethionine. Has broad substrate specificity with 6-aminopurine nucleosides as preferred substrates. The chain is S-methyl-5'-thioadenosine phosphorylase from Sclerotinia sclerotiorum (strain ATCC 18683 / 1980 / Ss-1) (White mold).